Here is a 599-residue protein sequence, read N- to C-terminus: Putative sensor histidine kinase NtrY-like (599 aa).

The next 4 membrane-spanning stretches (helical) occupy residues 17–37 (VLIFTLATAAIIFACATFYVI), 44–64 (FSTIIGFLLVDLAIFLILGVV), 85–105 (IVIAFSLVAAIPTIIVSVFSV), and 285–305 (IMFIFIALLLLFVAISFGVIF). The 55-residue stretch at 307-361 (AKIVKPIKKLVTATDNVKDGDLTVQVPENEVDKDEIGTLYVAFNRMIKQLSRQQR) folds into the HAMP domain. The Histidine kinase domain maps to 378 to 589 (KVAHEIKNPL…IIDIKFDLKE (212 aa)). His381 carries the phosphohistidine; by autocatalysis modification.

The protein localises to the cell membrane. The enzyme catalyses ATP + protein L-histidine = ADP + protein N-phospho-L-histidine.. Its function is as follows. Member of the two-component regulatory system RC0948/RC0849. In Rickettsia conorii (strain ATCC VR-613 / Malish 7), this protein is Putative sensor histidine kinase NtrY-like.